A 194-amino-acid chain; its full sequence is Adenylate kinase (194 aa).

ATP is bound at residue 10–15 (GAGKGT). An NMP region spans residues 30 to 59 (STGDMLRAAVAQQSEIGKRAKAVMDAGQLV). Residues T31, R36, 57 to 59 (QLV), 85 to 88 (GYPR), and Q92 contribute to the AMP site. The LID stretch occupies residues 126–142 (SRVAETIAKGAQVRSDD). R127 contributes to the ATP binding site. Residues R139 and R150 each contribute to the AMP site. ATP is bound at residue A178.

Belongs to the adenylate kinase family. Monomer.

The protein resides in the cytoplasm. The enzyme catalyses AMP + ATP = 2 ADP. The protein operates within purine metabolism; AMP biosynthesis via salvage pathway; AMP from ADP: step 1/1. Its function is as follows. Catalyzes the reversible transfer of the terminal phosphate group between ATP and AMP. Plays an important role in cellular energy homeostasis and in adenine nucleotide metabolism. This Brucella melitensis biotype 1 (strain ATCC 23456 / CCUG 17765 / NCTC 10094 / 16M) protein is Adenylate kinase.